The following is a 452-amino-acid chain: Trigger factor (452 aa).

The region spanning 170-256 is the PPIase FKBP-type domain; that stretch reads NSIVKVDFVE…IKSIKKRDLP (87 aa).

It belongs to the FKBP-type PPIase family. Tig subfamily.

The protein resides in the cytoplasm. The catalysed reaction is [protein]-peptidylproline (omega=180) = [protein]-peptidylproline (omega=0). In terms of biological role, involved in protein export. Acts as a chaperone by maintaining the newly synthesized protein in an open conformation. Functions as a peptidyl-prolyl cis-trans isomerase. This Borrelia garinii subsp. bavariensis (strain ATCC BAA-2496 / DSM 23469 / PBi) (Borreliella bavariensis) protein is Trigger factor.